The primary structure comprises 204 residues: Tat proofreading chaperone DmsD (204 aa).

It belongs to the TorD/DmsD family. DmsD subfamily.

In terms of biological role, required for biogenesis/assembly of DMSO reductase, but not for the interaction of the DmsA signal peptide with the Tat system. May be part of a chaperone cascade complex that facilitates a folding-maturation pathway for the substrate protein. In Salmonella typhi, this protein is Tat proofreading chaperone DmsD.